A 267-amino-acid polypeptide reads, in one-letter code: MSAMDVMIHSSSFLLPCDETSTGTRYALVVLNQSLPRFTPLLWEHAKLRLCADGGANRIYDELPLFFPNEDALAIRNRYKPDVIKGDMDSIRRDVLDFYINLGTKVIDESHDQDTTDLDKCILYIRHSTLNQETSGLQILATGALGGRFDHEAGNLNVLYRYPDTRIVLLSDDCLIQLLPKTHRHEIHIQSSLEGPHCGLIPIGTPSAKTTTSGLQWDLSNTEMRFGGLISTSNLVKEEKITVESDSDLLWTISIKKTGLSIQDHTP.

It belongs to the thiamine pyrophosphokinase family. In terms of tissue distribution, expressed in roots, leaves and flowers.

The protein resides in the cytoplasm. It is found in the cytosol. It catalyses the reaction thiamine + ATP = thiamine diphosphate + AMP + H(+). Its pathway is cofactor biosynthesis; thiamine diphosphate biosynthesis; thiamine diphosphate from thiamine: step 1/1. Functionally, catalyzes the phosphorylation of thiamine to thiamine pyrophosphate (TPP). TPP is an active cofactor for enzymes involved in glycolysis and energy production. Plant leaves require high levels of TPP for photosynthesis and carbohydrate metabolism. The polypeptide is Thiamine pyrophosphokinase 1 (Arabidopsis thaliana (Mouse-ear cress)).